The following is a 301-amino-acid chain: Nucleosome assembly protein 1;3 (301 aa).

Positions 15–69 (VETLKNKLQALAEQHVDVLESLAPVVRKRVDVLIEIQSQHDELEAKFLEEKAALE) form a coiled coil. The Nuclear export signal signature appears at 36 to 51 (LAPVVRKRVDVLIEIQ). The disordered stretch occupies residues 278–301 (DEDYGASWVDDEEDDDDEYSDEEA).

This sequence belongs to the nucleosome assembly protein (NAP) family.

It localises to the nucleus. The protein localises to the cytoplasm. In terms of biological role, may modulate chromatin structure by regulation of nucleosome assembly/disassembly. The chain is Nucleosome assembly protein 1;3 (NAP1;3) from Oryza sativa subsp. japonica (Rice).